A 165-amino-acid chain; its full sequence is Large ribosomal subunit protein uL11 (165 aa).

The residue at position 38 (Ser-38) is a Phosphoserine. Lys-40 is covalently cross-linked (Glycyl lysine isopeptide (Lys-Gly) (interchain with G-Cter in SUMO2)). Lys-48 participates in a covalent cross-link: Glycyl lysine isopeptide (Lys-Gly) (interchain with G-Cter in ubiquitin). Lys-54 bears the N6-acetyllysine mark. Lys-83 is covalently cross-linked (Glycyl lysine isopeptide (Lys-Gly) (interchain with G-Cter in ubiquitin)). Ser-165 is modified (phosphoserine).

Belongs to the universal ribosomal protein uL11 family. As to quaternary structure, component of the large ribosomal subunit. Mature ribosomes consist of a small (40S) and a large (60S) subunit. The 40S subunit contains about 33 different proteins and 1 molecule of RNA (18S). The 60S subunit contains about 49 different proteins and 3 molecules of RNA (28S, 5.8S and 5S). Post-translationally, ubiquitinated at Lys-48 and Lys-83 by RNF14 and RNF25 in response to ribosome collisions (ribosome stalling).

Its subcellular location is the cytoplasm. In terms of biological role, component of the large ribosomal subunit. The ribosome is a large ribonucleoprotein complex responsible for the synthesis of proteins in the cell. Binds directly to 26S ribosomal RNA. The sequence is that of Large ribosomal subunit protein uL11 (Rpl12) from Mus musculus (Mouse).